The primary structure comprises 90 residues: UPF0223 protein lwe1035 (90 aa).

This sequence belongs to the UPF0223 family.

The sequence is that of UPF0223 protein lwe1035 from Listeria welshimeri serovar 6b (strain ATCC 35897 / DSM 20650 / CCUG 15529 / CIP 8149 / NCTC 11857 / SLCC 5334 / V8).